The following is a 1641-amino-acid chain: MHRAVDPPGARSAREAFALGGLSCAGAWSSCPPHPPPRSSWLPGGRCSASVGQPPLSAPLPPSHGSSSGHPNKPYYAPGTPTPRPLHGKLESLHGCVQALLREPAQPGLWEQLGQLYESEHDSEEAVCCYHRALRYGGSFAELGPRIGRLQQAQLWNFHAGSCQHRAKVLPPLEQVWNLLHLEHKRNYGAKRGGPPVKRSAEPPVVQPMPPAALSGPSGEEGLSPGGKRRRGCSSEQAGLPPGLPLPPPPPPPPPPPPPPPPPPPPLPGLAISPPFQLTKPGLWNTLHGDAWGPERKGSAPPERQEQRHSMPHSYPYPAPAYSAHPPSHRLVPNTPLGPGPRPPGAESHGCLPATRPPGSDLRESRVQRSRMDSSVSPAASTACVPYAPSRPPGLPGTSSSSSSSSSSNNTGLRGVEPSPGIPGADHYQNPALEISPHQARLGPSAHSSRKPFLTAPAATPHLSLPPGTPSSPPPPCPRLLRPPPPPAWMKGSACRAAREDGEILGELFFGAEGPPRPPPPPLPHRDGFLGPPNPRFSVGTQDSHNPPIPPTTTSSSSSSNSHSSSPTGPVPFPPPSYLARSIDPLPRPSSPTLSPQDPPLPPLTLALPPAPPSSCHQNTSGSFRRSESPRPRVSFPKTPEVGQGPPPGPVSKAPQPVPPGVGELPARGPRLFDFPPTPLEDQFEEPAEFKILPDGLANIMKMLDESIRKEEEQQQQQEAGVAPPPPLKEPFASLQPPFPSDTAPATTTAAPTTATTTTTTTTTTTQEEEKKPPPALPPPPPLAKFPPPPQPQPPPPPPASPASLLKSLASVLEGQKYCYRGTGAAVSTRPGSVPATQYSPSPASGATAPPPTSVAPSAQGSPKPSVSSSSQFSTSGGPWAREHRAGEEPAPGPVTPAQLPPPLPLPPARSESEVLEEISRACETLVERVGRSAINPVDTADPVDSGTEPQPPPAQAKEESGGVAVAAAGPGSGKRRQKEHRRHRRACRDSVGRRPREGRAKAKAKAPKEKSRRVLGNLDLQSEEIQGREKARPDVGGVSKVKTPTAPAPPPAPAPAAQPTPPSAPVPGKKTREEAPGPPGVSRADMLKLRSLSEGPPKELKIRLIKVESGDKETFIASEVEERRLRMADLTISHCAADVMRASKNAKVKGKFRESYLSPAQSVKPKINTEEKLPREKLNPPTPSIYLESKRDAFSPVLLQFCTDPRNPITVIRGLAGSLRLNLGLFSTKTLVEASGEHTVEVRTQVQQPSDENWDLTGTRQIWPCESSRSHTTIAKYAQYQASSFQESLQEERESEDEESEEPDSTTGTSPSSAPDPKNHHIIKFGTNIDLSDAKRWKPQLQELLKLPAFMRVTSTGNMLSHVGHTILGMNTVQLYMKVPGSRTPGHQENNNFCSVNINIGPGDCEWFAVHEHYWETISAFCDRHGVDYLTGSWWPILDDLYASNIPVYRFVQRPGDLVWINAGTVHWVQATGWCNNIAWNVGPLTAYQYQLALERYEWNEVKNVKSIVPMIHVSWNVARTVKISDPDLFKMIKFCLLQSMKHCQVQRESLVRAGKKIAYQGRVKDEPAYYCNECDVEVFNILFVTSENGSRNTYLVHCEGCARRRSAGLQGVVVLEQYRTEELAQAYDAFTLAPASTSR.

Disordered stretches follow at residues 42 to 89, 188 to 682, 704 to 808, and 824 to 1085; these read LPGG…LHGK, YGAK…PLED, LDES…LLKS, and GAAV…VSRA. Residues 214 to 223 are compositionally biased toward low complexity; it reads LSGPSGEEGL. Serine 224 is modified (phosphoserine). Residues 242 to 268 are compositionally biased toward pro residues; it reads PGLPLPPPPPPPPPPPPPPPPPPPPLP. Residues 293 to 309 show a composition bias toward basic and acidic residues; the sequence is GPERKGSAPPERQEQRH. The segment covering 312–326 has biased composition (low complexity); the sequence is PHSYPYPAPAYSAHP. Residues 361–372 are compositionally biased toward basic and acidic residues; sequence DLRESRVQRSRM. A compositionally biased stretch (low complexity) spans 396–415; sequence PGTSSSSSSSSSSNNTGLRG. Residues 467-488 are compositionally biased toward pro residues; it reads PGTPSSPPPPCPRLLRPPPPPA. Low complexity predominate over residues 552 to 568; the sequence is TTTSSSSSSNSHSSSPT. Composition is skewed to pro residues over residues 597–613 and 645–660; these read QDPP…PAPP and GPPP…PVPP. The span at 704–713 shows a compositional bias: basic and acidic residues; it reads LDESIRKEEE. Positions 743-766 are enriched in low complexity; the sequence is TAPATTTAAPTTATTTTTTTTTTT. Positions 774-801 are enriched in pro residues; it reads PPALPPPPPLAKFPPPPQPQPPPPPPAS. The span at 855–879 shows a compositional bias: low complexity; the sequence is VAPSAQGSPKPSVSSSSQFSTSGGP. Residues 891-908 show a composition bias toward pro residues; that stretch reads APGPVTPAQLPPPLPLPP. A compositionally biased stretch (basic and acidic residues) spans 918 to 931; that stretch reads EISRACETLVERVG. Positions 974-987 are enriched in basic residues; the sequence is GKRRQKEHRRHRRA. The segment covering 988–1001 has biased composition (basic and acidic residues); it reads CRDSVGRRPREGRA. Residues 1002-1014 are compositionally biased toward basic residues; it reads KAKAKAPKEKSRR. The segment covering 1047–1066 has biased composition (pro residues); sequence APAPPPAPAPAAQPTPPSAP. Residue lysine 1107 forms a Glycyl lysine isopeptide (Lys-Gly) (interchain with G-Cter in SUMO2) linkage. Positions 1286-1323 are disordered; sequence FQESLQEERESEDEESEEPDSTTGTSPSSAPDPKNHHI. Positions 1294–1305 are enriched in acidic residues; it reads RESEDEESEEPD. Low complexity predominate over residues 1306–1317; the sequence is STTGTSPSSAPD. One can recognise a JmjC domain in the interval 1337 to 1500; sequence RWKPQLQELL…YQLALERYEW (164 aa). 3 residues coordinate Fe cation: histidine 1388, glutamate 1390, and histidine 1468. Zn(2+) is bound by residues cysteine 1573, cysteine 1576, cysteine 1600, and cysteine 1603.

The protein belongs to the UTX family. As to quaternary structure, interacts with TLE1. Component of the MLL4 complex, at least composed of KMT2B/MLL4, ASH2L, RBBP5, WDR5, and KDM6B. Interacts with TBX21, SMARCA4, SMARCC1 and SMARCC2. Requires L-ascorbate as cofactor. Fe(2+) serves as cofactor.

It is found in the nucleus. It catalyses the reaction N(6),N(6),N(6)-trimethyl-L-lysyl(27)-[histone H3] + 2 2-oxoglutarate + 2 O2 = N(6)-methyl-L-lysyl(27)-[histone H3] + 2 formaldehyde + 2 succinate + 2 CO2. Functionally, histone demethylase that specifically demethylates 'Lys-27' of histone H3, thereby playing a central role in histone code. Demethylates trimethylated and dimethylated H3 'Lys-27'. Plays a central role in regulation of posterior development, by regulating HOX gene expression. Involved in inflammatory response by participating in macrophage differentiation in case of inflammation by regulating gene expression and macrophage differentiation. Plays a demethylase-independent role in chromatin remodeling to regulate T-box family member-dependent gene expression by acting as a link between T-box factors and the SMARCA4-containing SWI/SNF remodeling complex. The polypeptide is Lysine-specific demethylase 6B (Kdm6b) (Mus musculus (Mouse)).